Reading from the N-terminus, the 339-residue chain is Heat-inducible transcription repressor HrcA (339 aa).

The protein belongs to the HrcA family.

Functionally, negative regulator of class I heat shock genes (grpE-dnaK-dnaJ and groELS operons). Prevents heat-shock induction of these operons. This is Heat-inducible transcription repressor HrcA from Clostridium perfringens (strain SM101 / Type A).